The chain runs to 468 residues: Methylenetetrahydrofolate--tRNA-(uracil-5-)-methyltransferase TrmFO (468 aa).

13–18 contacts FAD; that stretch reads GGGLAG.

This sequence belongs to the MnmG family. TrmFO subfamily. FAD is required as a cofactor.

Its subcellular location is the cytoplasm. It catalyses the reaction uridine(54) in tRNA + (6R)-5,10-methylene-5,6,7,8-tetrahydrofolate + NADH + H(+) = 5-methyluridine(54) in tRNA + (6S)-5,6,7,8-tetrahydrofolate + NAD(+). The catalysed reaction is uridine(54) in tRNA + (6R)-5,10-methylene-5,6,7,8-tetrahydrofolate + NADPH + H(+) = 5-methyluridine(54) in tRNA + (6S)-5,6,7,8-tetrahydrofolate + NADP(+). In terms of biological role, catalyzes the folate-dependent formation of 5-methyl-uridine at position 54 (M-5-U54) in all tRNAs. This chain is Methylenetetrahydrofolate--tRNA-(uracil-5-)-methyltransferase TrmFO, found in Bartonella henselae (strain ATCC 49882 / DSM 28221 / CCUG 30454 / Houston 1) (Rochalimaea henselae).